The primary structure comprises 202 residues: Recombination protein RecR (202 aa).

A C4-type zinc finger spans residues 61–76 (CARCNSFTEDEVCATC). The region spanning 84-179 (GLLCIVETPA…KVTRLARGVP (96 aa)) is the Toprim domain.

Belongs to the RecR family.

Its function is as follows. May play a role in DNA repair. It seems to be involved in an RecBC-independent recombinational process of DNA repair. It may act with RecF and RecO. In Bordetella bronchiseptica (strain ATCC BAA-588 / NCTC 13252 / RB50) (Alcaligenes bronchisepticus), this protein is Recombination protein RecR.